Consider the following 294-residue polypeptide: Phosphatidylinositol transfer protein SFH5 (294 aa).

A CRAL-TRIO domain is found at His-100–Asn-266. Heme contacts are provided by Tyr-128, Arg-148, His-173, Tyr-175, and Lys-209.

The protein belongs to the SFH5 family. Heme b is required as a cofactor.

Its subcellular location is the cytoplasm. The protein resides in the endoplasmic reticulum membrane. It is found in the microsome membrane. It carries out the reaction a 1,2-diacyl-sn-glycero-3-phospho-(1D-myo-inositol)(in) = a 1,2-diacyl-sn-glycero-3-phospho-(1D-myo-inositol)(out). Its function is as follows. Non-classical phosphatidylinositol (PtdIns) transfer protein (PITP), which exhibits PtdIns-binding/transfer activity in the absence of detectable PtdCho-binding/transfer activity. Regulates PtdIns(4,5)P2 homeostasis at the plasma membrane. Heme-binding protein that may play a role in organic oxidant-induced stress responses. The protein is Phosphatidylinositol transfer protein SFH5 (SFH5) of Saccharomyces cerevisiae (strain YJM789) (Baker's yeast).